The sequence spans 571 residues: NADH-quinone oxidoreductase subunit C/D (571 aa).

The NADH dehydrogenase I subunit C stretch occupies residues 1 to 171 (MQASEKTLNE…NLSNTMNYRR (171 aa)). Positions 194-571 (AQVVLNWGPL…LDPVVGEVDR (378 aa)) are NADH dehydrogenase I subunit D.

It in the N-terminal section; belongs to the complex I 30 kDa subunit family. In the C-terminal section; belongs to the complex I 49 kDa subunit family. NDH-1 is composed of 13 different subunits. Subunits NuoB, CD, E, F, and G constitute the peripheral sector of the complex.

Its subcellular location is the cell inner membrane. The enzyme catalyses a quinone + NADH + 5 H(+)(in) = a quinol + NAD(+) + 4 H(+)(out). Functionally, NDH-1 shuttles electrons from NADH, via FMN and iron-sulfur (Fe-S) centers, to quinones in the respiratory chain. The immediate electron acceptor for the enzyme in this species is believed to be ubiquinone. Couples the redox reaction to proton translocation (for every two electrons transferred, four hydrogen ions are translocated across the cytoplasmic membrane), and thus conserves the redox energy in a proton gradient. The chain is NADH-quinone oxidoreductase subunit C/D (nuoC) from Hydrogenobaculum sp. (strain Y04AAS1).